The chain runs to 452 residues: tRNA-2-methylthio-N(6)-dimethylallyladenosine synthase (452 aa).

Residues 16–134 (KRFFISTWGC…LPEYIERVKT (119 aa)) enclose the MTTase N-terminal domain. [4Fe-4S] cluster is bound by residues Cys25, Cys61, Cys95, Cys171, Cys175, and Cys178. The Radical SAM core domain occupies 157 to 387 (RKSDIKAFVT…VEAVNEIMAR (231 aa)). Residues 390 to 452 (KEFEGKTVEV…NSFSLTGEII (63 aa)) enclose the TRAM domain.

This sequence belongs to the methylthiotransferase family. MiaB subfamily. In terms of assembly, monomer. Requires [4Fe-4S] cluster as cofactor.

It localises to the cytoplasm. The catalysed reaction is N(6)-dimethylallyladenosine(37) in tRNA + (sulfur carrier)-SH + AH2 + 2 S-adenosyl-L-methionine = 2-methylsulfanyl-N(6)-dimethylallyladenosine(37) in tRNA + (sulfur carrier)-H + 5'-deoxyadenosine + L-methionine + A + S-adenosyl-L-homocysteine + 2 H(+). In terms of biological role, catalyzes the methylthiolation of N6-(dimethylallyl)adenosine (i(6)A), leading to the formation of 2-methylthio-N6-(dimethylallyl)adenosine (ms(2)i(6)A) at position 37 in tRNAs that read codons beginning with uridine. The polypeptide is tRNA-2-methylthio-N(6)-dimethylallyladenosine synthase (Clostridium novyi (strain NT)).